The following is a 439-amino-acid chain: Kelch domain-containing protein 10 (439 aa).

Positions 1–50 (MSAAQGWDRNRRRGGGAAGGASGVSGAGAAGGGRGTGQLNRFVQLSGRPH) are disordered. Arg13 is subject to Omega-N-methylarginine. Residues 15 to 36 (GGAAGGASGVSGAGAAGGGRGT) show a composition bias toward gly residues. 6 Kelch repeats span residues 87–154 (PARS…LASM), 155–198 (SLVL…SCRG), 199–260 (KRPS…RYRH), 261–319 (EIAH…HSCV), 320–364 (QIKN…VYFH), and 365–403 (CAAVTPAGCMYIHGGVVNIHENKRTGSLFKIWLVVPSLL). The interaction with CUL2 stretch occupies residues 398–439 (VVPSLLELAWEKLLAAFPNLANLSRTQLLHLGLTQELIERLK).

Belongs to the KLHDC10 family. As to quaternary structure, component of a CRL2 E3 ubiquitin-protein ligase complex, also named ECS (Elongin BC-CUL2/5-SOCS-box protein) complex, composed of CUL2, Elongin BC (ELOB and ELOC), RBX1 and substrate-specific adapter KLHDC10. Interacts (via the 6 Kelch repeats) with PPP5C.

Its subcellular location is the nucleus. The protein localises to the cytoplasm. Its pathway is protein modification; protein ubiquitination. Functionally, substrate-recognition component of a Cul2-RING (CRL2) E3 ubiquitin-protein ligase complex of the DesCEND (destruction via C-end degrons) pathway, which recognizes a C-degron located at the extreme C-terminus of target proteins, leading to their ubiquitination and degradation. The C-degron recognized by the DesCEND pathway is usually a motif of less than ten residues and can be present in full-length proteins, truncated proteins or proteolytically cleaved forms. The CRL2(KLHDC10) complex specifically recognizes proteins with a proline-glycine (Pro-Gly) or an alanine tail (CAT tail) at the C-terminus, leading to their ubiquitination and degradation. The CRL2(KLHDC10) complex is involved in the ribosome-associated quality control (RQC) pathway, which mediates the extraction of incompletely synthesized nascent chains from stalled ribosomes: CRL2(KLHDC10) acts downstream of NEMF and recognizes CAT tails associated with stalled nascent chains, leading to their ubiquitination and degradation. Participates in the oxidative stress-induced cell death through MAP3K5 activation. Inhibits PPP5C phosphatase activity on MAP3K5. Acts as a regulator of necroptosis. The sequence is that of Kelch domain-containing protein 10 from Mus musculus (Mouse).